The chain runs to 549 residues: Membrane protein insertase YidC (549 aa).

A helical transmembrane segment spans residues 8–28 (VLLATVLSVAVLIVWQFVFPS). Pro residues predominate over residues 29–39 (PKPKPQPPKPP). Positions 29–68 (PKPKPQPPKPPEAAQRAEAPAAPAPGQPAAQAPAPAVPQD) are disordered. Low complexity-rich tracts occupy residues 40–49 (EAAQRAEAPA) and 55–68 (QPAA…VPQD). The next 4 helical transmembrane spans lie at 328-348 (IDYG…LFVM), 354-374 (LVAN…VLLY), 424-444 (LGGC…YATL), and 502-522 (PGFF…YIFV).

Belongs to the OXA1/ALB3/YidC family. Type 1 subfamily. As to quaternary structure, interacts with the Sec translocase complex via SecD. Specifically interacts with transmembrane segments of nascent integral membrane proteins during membrane integration.

The protein resides in the cell inner membrane. Functionally, required for the insertion and/or proper folding and/or complex formation of integral membrane proteins into the membrane. Involved in integration of membrane proteins that insert both dependently and independently of the Sec translocase complex, as well as at least some lipoproteins. Aids folding of multispanning membrane proteins. This is Membrane protein insertase YidC from Anaeromyxobacter sp. (strain Fw109-5).